Reading from the N-terminus, the 445-residue chain is Probable D-serine dehydratase (445 aa).

At Lys111 the chain carries N6-(pyridoxal phosphate)lysine.

This sequence belongs to the serine/threonine dehydratase family. DsdA subfamily. Pyridoxal 5'-phosphate is required as a cofactor.

It carries out the reaction D-serine = pyruvate + NH4(+). This Burkholderia pseudomallei (strain 1106a) protein is Probable D-serine dehydratase.